Consider the following 98-residue polypeptide: Large ribosomal subunit protein uL23 (98 aa).

The protein belongs to the universal ribosomal protein uL23 family. Part of the 50S ribosomal subunit. Contacts protein L29, and trigger factor when it is bound to the ribosome.

Its function is as follows. One of the early assembly proteins it binds 23S rRNA. One of the proteins that surrounds the polypeptide exit tunnel on the outside of the ribosome. Forms the main docking site for trigger factor binding to the ribosome. This Sorangium cellulosum (strain So ce56) (Polyangium cellulosum (strain So ce56)) protein is Large ribosomal subunit protein uL23.